The chain runs to 259 residues: Ribonuclease PH (259 aa).

Residues Arg-88 and Gly-126–Arg-128 contribute to the phosphate site.

The protein belongs to the RNase PH family. In terms of assembly, homohexameric ring arranged as a trimer of dimers.

It catalyses the reaction tRNA(n+1) + phosphate = tRNA(n) + a ribonucleoside 5'-diphosphate. In terms of biological role, phosphorolytic 3'-5' exoribonuclease that plays an important role in tRNA 3'-end maturation. Removes nucleotide residues following the 3'-CCA terminus of tRNAs; can also add nucleotides to the ends of RNA molecules by using nucleoside diphosphates as substrates, but this may not be physiologically important. Probably plays a role in initiation of 16S rRNA degradation (leading to ribosome degradation) during starvation. The sequence is that of Ribonuclease PH from Mycobacterium ulcerans (strain Agy99).